The following is a 40-amino-acid chain: Photosystem II reaction center protein J (40 aa).

A helical membrane pass occupies residues 8–28 (IPLWIIGTVTGIPVIGLIGIF).

The protein belongs to the PsbJ family. As to quaternary structure, PSII is composed of 1 copy each of membrane proteins PsbA, PsbB, PsbC, PsbD, PsbE, PsbF, PsbH, PsbI, PsbJ, PsbK, PsbL, PsbM, PsbT, PsbX, PsbY, PsbZ, Psb30/Ycf12, at least 3 peripheral proteins of the oxygen-evolving complex and a large number of cofactors. It forms dimeric complexes.

Its subcellular location is the plastid. It is found in the chloroplast thylakoid membrane. Its function is as follows. One of the components of the core complex of photosystem II (PSII). PSII is a light-driven water:plastoquinone oxidoreductase that uses light energy to abstract electrons from H(2)O, generating O(2) and a proton gradient subsequently used for ATP formation. It consists of a core antenna complex that captures photons, and an electron transfer chain that converts photonic excitation into a charge separation. The protein is Photosystem II reaction center protein J of Citrus sinensis (Sweet orange).